The chain runs to 369 residues: D-alanine--D-alanine ligase (369 aa).

An ATP-grasp domain is found at 152 to 359 (KKLFAAEGLP…YPSLLATMVE (208 aa)). Residue 180–235 (RERLGLPVFVKPARGGSSIGVSRVSSWDELDAAVAAARDHDPKVIVEAAIAGRELE) participates in ATP binding. 3 residues coordinate Mg(2+): aspartate 314, glutamate 326, and asparagine 328.

This sequence belongs to the D-alanine--D-alanine ligase family. Mg(2+) serves as cofactor. Requires Mn(2+) as cofactor.

It localises to the cytoplasm. The enzyme catalyses 2 D-alanine + ATP = D-alanyl-D-alanine + ADP + phosphate + H(+). Its pathway is cell wall biogenesis; peptidoglycan biosynthesis. Its function is as follows. Cell wall formation. This is D-alanine--D-alanine ligase from Mycolicibacterium paratuberculosis (strain ATCC BAA-968 / K-10) (Mycobacterium paratuberculosis).